Here is a 1196-residue protein sequence, read N- to C-terminus: Ice nucleation protein (1196 aa).

Positions 172 to 1147 (ATYGSTLSGD…LSAGEDSTLI (976 aa)) are octapeptide periodicity. Disordered stretches follow at residues 269–304 (GYGSTQTSGEDSSLTAGYGSTQTAQEGSNLTAGYGS), 319–352 (GSTQTSGGDSSLTAGYGSTQTAQEGSNLTSGYGS), and 415–442 (GSTQTSGSDSSLTAGYGSTQTAQEGSNL). 2 stretches are compositionally biased toward polar residues: residues 271–298 (GSTQTSGEDSSLTAGYGSTQTAQEGSNL) and 319–346 (GSTQTSGGDSSLTAGYGSTQTAQEGSNL).

It belongs to the bacterial ice nucleation protein family. In terms of assembly, membrane environment or aggregation seems to be required for ice nucleation activity.

It is found in the cell outer membrane. Ice nucleation proteins enable bacteria to nucleate crystallization in supercooled water. The polypeptide is Ice nucleation protein (inaV) (Pseudomonas syringae).